We begin with the raw amino-acid sequence, 266 residues long: BTB/POZ domain-containing protein KCTD2 (266 aa).

An N-acetylalanine modification is found at Ala2. Residues 38–79 (GRHPADTAASPPPPRTAGARARTSGADGRRRGRPLGPAQRGR) form a disordered region. A compositionally biased stretch (low complexity) spans 53–63 (TAGARARTSGA). The 99-residue stretch at 76–174 (QRGRYLLRDT…LVKERIRDNE (99 aa)) folds into the BTB domain.

This chain is BTB/POZ domain-containing protein KCTD2 (Kctd2), found in Mus musculus (Mouse).